The primary structure comprises 360 residues: MATTVHLSSSSLFSQSRGRRDNSISSVKSLRKRTVLSLSSALTSQDAGHMIQPEGKSNDNNSAFDFKLYMIRKAESVNAALDVSVPLLKPLTIQEAVRYSLLAGGKRVRPLLCIAACELVGGDEATAMSAACAVEMIHTSSLIHDDLPCMDNADLRRGKPTNHKVYGEDMAVLAGDALLALAFEHMTVVSSGLVAPEKMIRAVVELARAIGTTGLVAGQMIDLASERLNPDKVGLEHLEFIHLHKTAALLEAAAVLGVIMGGGTEQEIEKLRKYARCIGLLFQVVDDILDVTKSTEELGKTAGKDVMAGKLTYPRLIGLEGSREVAEKLRREAEEQLLGFDPSKAAPLVALASYIACRHN.

Residues 1–39 (MATTVHLSSSSLFSQSRGRRDNSISSVKSLRKRTVLSLS) constitute a chloroplast transit peptide. Residues lysine 106, arginine 109, and histidine 138 each coordinate isopentenyl diphosphate. Positions 145 and 151 each coordinate Mg(2+). Arginine 156 is a binding site for dimethylallyl diphosphate. Arginine 157 contacts isopentenyl diphosphate. Dimethylallyl diphosphate is bound by residues lysine 245, threonine 246, glutamine 283, lysine 300, and lysine 310.

Belongs to the FPP/GGPP synthase family. Monomer. No interactions with GGR. Mg(2+) is required as a cofactor.

The protein localises to the plastid. Its subcellular location is the chloroplast. It carries out the reaction isopentenyl diphosphate + dimethylallyl diphosphate = (2E)-geranyl diphosphate + diphosphate. The enzyme catalyses isopentenyl diphosphate + (2E)-geranyl diphosphate = (2E,6E)-farnesyl diphosphate + diphosphate. The catalysed reaction is isopentenyl diphosphate + (2E,6E)-farnesyl diphosphate = (2E,6E,10E)-geranylgeranyl diphosphate + diphosphate. Its pathway is isoprenoid biosynthesis; farnesyl diphosphate biosynthesis; farnesyl diphosphate from geranyl diphosphate and isopentenyl diphosphate: step 1/1. It participates in isoprenoid biosynthesis; geranyl diphosphate biosynthesis; geranyl diphosphate from dimethylallyl diphosphate and isopentenyl diphosphate: step 1/1. It functions in the pathway isoprenoid biosynthesis; geranylgeranyl diphosphate biosynthesis; geranylgeranyl diphosphate from farnesyl diphosphate and isopentenyl diphosphate: step 1/1. In terms of biological role, catalyzes the trans-addition of the three molecules of IPP onto DMAPP to form geranylgeranyl pyrophosphate. This chain is Geranylgeranyl pyrophosphate synthase 9, chloroplastic (GGPPS9), found in Arabidopsis thaliana (Mouse-ear cress).